Consider the following 181-residue polypeptide: Large ribosomal subunit protein uL5 (181 aa).

It belongs to the universal ribosomal protein uL5 family. As to quaternary structure, part of the 50S ribosomal subunit; part of the 5S rRNA/L5/L18/L25 subcomplex. Contacts the 5S rRNA and the P site tRNA. Forms a bridge to the 30S subunit in the 70S ribosome.

This is one of the proteins that bind and probably mediate the attachment of the 5S RNA into the large ribosomal subunit, where it forms part of the central protuberance. In the 70S ribosome it contacts protein S13 of the 30S subunit (bridge B1b), connecting the 2 subunits; this bridge is implicated in subunit movement. Contacts the P site tRNA; the 5S rRNA and some of its associated proteins might help stabilize positioning of ribosome-bound tRNAs. The polypeptide is Large ribosomal subunit protein uL5 (Picosynechococcus sp. (strain ATCC 27264 / PCC 7002 / PR-6) (Agmenellum quadruplicatum)).